A 62-amino-acid chain; its full sequence is MKTTVILLLAIAIIFAIMTTLTSAKNEETMEEALKGLNELKERLKKQGIDTAALNLDEKLLT.

The signal sequence occupies residues 1–24 (MKTTVILLLAIAIIFAIMTTLTSA).

In terms of tissue distribution, expressed by the venom gland.

It localises to the secreted. Its function is as follows. May have antimicrobial properties, like most ant linear peptides. This Myrmecia gulosa (Red bulldog ant) protein is U-myrmeciitoxin(01)-Mg3a.